Reading from the N-terminus, the 459-residue chain is cAMP-dependent protein kinase regulatory subunit (459 aa).

Positions 30 to 219 are dimerization and phosphorylation; it reads QFCANYFNTK…TLANNLKNNF (190 aa). Disordered regions lie at residues 78-109 and 125-168; these read VNDR…DTKT and FDVK…PSSK. The segment covering 95 to 109 has biased composition (basic and acidic residues); the sequence is HSNHDEDPHAKDTKT. The span at 146 to 168 shows a compositional bias: low complexity; sequence KPSSSSQPNQQSASASSKTPSSK. Serine 180 bears the Phosphoserine mark. 3',5'-cyclic AMP-binding positions include 220–335, glutamate 285, arginine 294, 338–454, glutamate 404, and arginine 413; these read LFKQ…FLKD and VLKS…KSQD.

Belongs to the cAMP-dependent kinase regulatory chain family. Tetramer, composed of 2 regulatory (R) and 2 catalytic (C) subunits. In the presence of cAMP it dissociates into 2 active monomeric C subunits and an R dimer.

The protein is cAMP-dependent protein kinase regulatory subunit (BCY1) of Candida albicans (strain SC5314 / ATCC MYA-2876) (Yeast).